The sequence spans 465 residues: Ribulose bisphosphate carboxylase large chain (465 aa).

At K4 the chain carries N6,N6,N6-trimethyllysine. Substrate contacts are provided by N113 and T163. Residue K165 is the Proton acceptor of the active site. K167 is a substrate binding site. K191, D193, and E194 together coordinate Mg(2+). Position 191 is an N6-carboxylysine (K191). H284 (proton acceptor) is an active-site residue. Substrate-binding residues include R285, H317, and S369.

This sequence belongs to the RuBisCO large chain family. Type I subfamily. Heterohexadecamer of 8 large chains and 8 small chains; disulfide-linked. The disulfide link is formed within the large subunit homodimers. Mg(2+) is required as a cofactor. In terms of processing, the disulfide bond which can form in the large chain dimeric partners within the hexadecamer appears to be associated with oxidative stress and protein turnover.

Its subcellular location is the plastid. It is found in the chloroplast. The catalysed reaction is 2 (2R)-3-phosphoglycerate + 2 H(+) = D-ribulose 1,5-bisphosphate + CO2 + H2O. It catalyses the reaction D-ribulose 1,5-bisphosphate + O2 = 2-phosphoglycolate + (2R)-3-phosphoglycerate + 2 H(+). RuBisCO catalyzes two reactions: the carboxylation of D-ribulose 1,5-bisphosphate, the primary event in carbon dioxide fixation, as well as the oxidative fragmentation of the pentose substrate in the photorespiration process. Both reactions occur simultaneously and in competition at the same active site. The chain is Ribulose bisphosphate carboxylase large chain from Epacris sp.